The primary structure comprises 191 residues: Protein Ves (191 aa).

It belongs to the Ves family.

This is Protein Ves from Shigella flexneri.